Consider the following 42-residue polypeptide: Large ribosomal subunit protein bL36 (42 aa).

It belongs to the bacterial ribosomal protein bL36 family.

The sequence is that of Large ribosomal subunit protein bL36 from Ehrlichia ruminantium (strain Gardel).